We begin with the raw amino-acid sequence, 590 residues long: L-fucose isomerase (590 aa).

Catalysis depends on proton acceptor residues Glu337 and Asp361. The Mn(2+) site is built by Glu337, Asp361, and His528.

This sequence belongs to the L-fucose isomerase family. Mn(2+) serves as cofactor.

Its subcellular location is the cytoplasm. The enzyme catalyses L-fucose = L-fuculose. Its pathway is carbohydrate degradation; L-fucose degradation; L-lactaldehyde and glycerone phosphate from L-fucose: step 1/3. Its function is as follows. Converts the aldose L-fucose into the corresponding ketose L-fuculose. The polypeptide is L-fucose isomerase (Bacteroides fragilis (strain YCH46)).